The following is a 404-amino-acid chain: Plasma serine protease inhibitor (404 aa).

The first 19 residues, 1–19 (MRLCLFLCLVLLGPRMATL), serve as a signal peptide directing secretion. Positions 20-24 (RRSQK) are cleaved as a propeptide — removed in mature form. Residues T35 and T36 are each glycosylated (O-linked (GalNAc...) threonine). N-linked (GlcNAc...) asparagine glycosylation is found at N245, N258, and N334.

It belongs to the serpin family. In terms of assembly, forms protease inhibiting heterodimers in extracellular body fluids with serine proteases such as activated protein C/coagulation factor V/F5, acrosin/ACR, chymotrypsinogen B/CTRB1, prothrombin/F2, factor Xa/F10, factor XI/F11, kallikrein/KLKB1, tissue kallikrein, trypsin/PRSS1, prostate specific antigen/KLK3, tissue plasminogen activator/PLAT and urinary plasminogen activator/PLAU. Forms membrane-anchored serine proteases inhibiting heterodimers with TMPRSS7 and TMPRSS11E. Interacts with SEMG2. N-glycosylated; glycans consist of a mixture of sialylated bi- (including sialyl-Lewis X epitopes), tri- and tetra-antennary complex-type chains; affects the maximal heparin- and thrombomodulin-enhanced rates of thrombin inhibition. O-glycosylated; further modified with 2 sialic acid residues. Proteolytically cleaved at the N-terminus; inhibits slightly the heparin- and thrombomodulin-enhanced rates of thrombin inhibition. N- and O-glycosylated. In terms of processing, proteolytically cleaved. Inhibition of proteases is accompanied by formation of a stable enzyme-inhibitor complex and by degradation of the serpin to lower molecular weight derivatives. Expressed strongly in the liver, and moderately in the kidney and testis, but not in other tissues tested.

It localises to the secreted. It is found in the extracellular space. With respect to regulation, its inhibitory activity is greatly enhanced in the presence of glycosaminoglycans, heparin, thrombomodulin and phospholipids vesicles. In terms of biological role, heparin-dependent serine protease inhibitor acting in body fluids and secretions. Inactivates serine proteases by binding irreversibly to their serine activation site. Involved in the regulation of intravascular and extravascular proteolytic activities. Plays hemostatic roles in the blood plasma. Acts as a procoagulant and pro-inflammatory factor by inhibiting the anticoagulant activated protein C factor as well as the generation of activated protein C factor by the thrombin/thrombomodulin complex. Acts as an anticoagulant factor by inhibiting blood coagulation factors like prothrombin, factor XI, factor Xa, plasma kallikrein and fibrinolytic enzymes such as tissue- and urinary-type plasminogen activators. In seminal plasma, inactivates several serine proteases implicated in the reproductive system. Inhibits the serpin acrosin; indirectly protects component of the male genital tract from being degraded by excessive released acrosin. Inhibits tissue- and urinary-type plasminogen activator, prostate-specific antigen and kallikrein activities; has a control on the sperm motility and fertilization. Inhibits the activated protein C-catalyzed degradation of SEMG1 and SEMG2; regulates the degradation of semenogelin during the process of transfer of spermatozoa from the male reproductive tract into the female tract. In urine, inhibits urinary-type plasminogen activator and kallikrein activities. Inactivates membrane-anchored serine proteases activities such as MPRSS7 and TMPRSS11E. Inhibits urinary-type plasminogen activator-dependent tumor cell invasion and metastasis. May also play a non-inhibitory role in seminal plasma and urine as a hydrophobic hormone carrier by its binding to retinoic acid. This chain is Plasma serine protease inhibitor (SERPINA5), found in Bos taurus (Bovine).